A 607-amino-acid chain; its full sequence is Elongation factor 4 (607 aa).

In terms of domain architecture, tr-type G spans 11-193 (EKIRNFSIIA…QIVEKVPAPT (183 aa)). GTP contacts are provided by residues 23–28 (DHGKST) and 140–143 (NKID).

The protein belongs to the TRAFAC class translation factor GTPase superfamily. Classic translation factor GTPase family. LepA subfamily.

The protein resides in the cell membrane. The enzyme catalyses GTP + H2O = GDP + phosphate + H(+). Required for accurate and efficient protein synthesis under certain stress conditions. May act as a fidelity factor of the translation reaction, by catalyzing a one-codon backward translocation of tRNAs on improperly translocated ribosomes. Back-translocation proceeds from a post-translocation (POST) complex to a pre-translocation (PRE) complex, thus giving elongation factor G a second chance to translocate the tRNAs correctly. Binds to ribosomes in a GTP-dependent manner. The polypeptide is Elongation factor 4 (Streptococcus pneumoniae (strain P1031)).